A 299-amino-acid polypeptide reads, in one-letter code: Bifunctional protein FolD (299 aa).

NADP(+)-binding positions include 164-166 and Ile234; that span reads GRS.

It belongs to the tetrahydrofolate dehydrogenase/cyclohydrolase family. In terms of assembly, homodimer.

It catalyses the reaction (6R)-5,10-methylene-5,6,7,8-tetrahydrofolate + NADP(+) = (6R)-5,10-methenyltetrahydrofolate + NADPH. The catalysed reaction is (6R)-5,10-methenyltetrahydrofolate + H2O = (6R)-10-formyltetrahydrofolate + H(+). Its pathway is one-carbon metabolism; tetrahydrofolate interconversion. Functionally, catalyzes the oxidation of 5,10-methylenetetrahydrofolate to 5,10-methenyltetrahydrofolate and then the hydrolysis of 5,10-methenyltetrahydrofolate to 10-formyltetrahydrofolate. In Christiangramia forsetii (strain DSM 17595 / CGMCC 1.15422 / KT0803) (Gramella forsetii), this protein is Bifunctional protein FolD.